The chain runs to 331 residues: Peroxidase 60 (331 aa).

The signal sequence occupies residues 1-26; it reads MAVKISTIEVLILSLALLSFGHGCYG. 4 disulfides stabilise this stretch: C37/C113, C70/C75, C119/C321, and C198/C230. H68 functions as the Proton acceptor in the catalytic mechanism. D69, G74, D76, and S78 together coordinate Ca(2+). P161 is a binding site for substrate. H191 provides a ligand contact to heme b. T192 is a binding site for Ca(2+). N-linked (GlcNAc...) asparagine glycosylation occurs at N245. S248 and D253 together coordinate Ca(2+).

The protein belongs to the peroxidase family. Classical plant (class III) peroxidase subfamily. Heme b is required as a cofactor. The cofactor is Ca(2+). As to expression, expressed in roots, slightly in leaves.

It is found in the secreted. The catalysed reaction is 2 a phenolic donor + H2O2 = 2 a phenolic radical donor + 2 H2O. Removal of H(2)O(2), oxidation of toxic reductants, biosynthesis and degradation of lignin, suberization, auxin catabolism, response to environmental stresses such as wounding, pathogen attack and oxidative stress. These functions might be dependent on each isozyme/isoform in each plant tissue. The polypeptide is Peroxidase 60 (PER60) (Arabidopsis thaliana (Mouse-ear cress)).